Consider the following 434-residue polypeptide: F-box/LRR-repeat protein 21 (434 aa).

One can recognise an F-box domain in the interval 39–85 (LLDWGTLPHHVILQIFQYLPLIDRARASSVCRRWNEVFHIPDLWRKF). LRR repeat units follow at residues 187–213 (DTPVDDPSLKILVANNSDTLRLLKMSS), 214–239 (CPHVSSDGILCVADHCQGLRELALNY), 242–265 (LSDEILLALSSETHVNLEHLRIDV), 322–347 (GRSVSRAILGRIGLNCPRLIELVVCA), 349–374 (GLLPLDSELIRIAKHCKNLTSLGLSE), and 375–400 (CEVSCSAFVEFVRLCGRRLTQLSIME).

Part of the SCF (SKP1-CUL1-F-box) E3 ubiquitin-protein ligase complex SCF(FBXL21) composed of CUL1, SKP1, RBX1 and FBXL21. Interacts with CRY1 and CRY2. Expressed in the hypothalamus, especially in the suprachiasmatic nucleus (SCN). Expression is driven by the core-clock. There is a pronounced diurnal and circadian expression rhythms rising rapidly at the start of the day and declining at the onset of the night.

The protein localises to the cytoplasm. It is found in the cytosol. Its subcellular location is the nucleus. It participates in protein modification; protein ubiquitination. Its function is as follows. Substrate-recognition component of the SCF(FBXL21) E3 ubiquitin ligase complex involved in circadian rhythm function. Plays a key role in the maintenance of both the speed and the robustness of the circadian clock oscillation. The SCF(FBXL21) complex mainly acts in the cytosol and mediates ubiquitination of CRY proteins (CRY1 and CRY2), leading to CRY proteins stabilization. The SCF(FBXL21) complex counteracts the activity of the SCF(FBXL3) complex and protects CRY proteins from degradation. Involved in the hypothalamic suprachiasmatic nucleus (SCN) clock regulating temporal organization of the daily activities. The chain is F-box/LRR-repeat protein 21 (Fbxl21) from Mus musculus (Mouse).